A 261-amino-acid polypeptide reads, in one-letter code: MSAIPDVQSTPDTRNIVIQRVGVKGVRYPITVKTSSGVQPSVGSWNMYVRLTEEQKGTHMSRFIALLEENNQPLDVAVFGALMRKMLVLLDADAGRIEVSFPYFINKTAPVSGVQSLMDYEVGLTGEMKNGELEVTLKVLVPVTSLCPCSKKISAYGAHNQRSHITVHAVLNGDLVVEELIAKIEEQASCELYGLLKRPDEKYVTERAYDNPKFVEDLVRDVAGMLNKDERVLAYTLEAENFESIHNHSAYALIERDKRLS.

The protein belongs to the GTP cyclohydrolase IV family.

It catalyses the reaction GTP + H2O = 7,8-dihydroneopterin 3'-triphosphate + formate + H(+). Its pathway is cofactor biosynthesis; 7,8-dihydroneopterin triphosphate biosynthesis; 7,8-dihydroneopterin triphosphate from GTP: step 1/1. In terms of biological role, converts GTP to 7,8-dihydroneopterin triphosphate. The polypeptide is GTP cyclohydrolase FolE2 (Herminiimonas arsenicoxydans).